The chain runs to 124 residues: Large ribosomal subunit protein bL12 (124 aa).

Belongs to the bacterial ribosomal protein bL12 family. Homodimer. Part of the ribosomal stalk of the 50S ribosomal subunit. Forms a multimeric L10(L12)X complex, where L10 forms an elongated spine to which 2 to 4 L12 dimers bind in a sequential fashion. Binds GTP-bound translation factors.

Functionally, forms part of the ribosomal stalk which helps the ribosome interact with GTP-bound translation factors. Is thus essential for accurate translation. This chain is Large ribosomal subunit protein bL12, found in Leptothrix cholodnii (strain ATCC 51168 / LMG 8142 / SP-6) (Leptothrix discophora (strain SP-6)).